Here is a 1011-residue protein sequence, read N- to C-terminus: E3 ubiquitin-protein ligase mib1 (1011 aa).

One can recognise an MIB/HERC2 1 domain in the interval 6-74 (NNRVMVEGVG…AYDLRIMDSA (69 aa)). Residues 80–132 (HDGTMCDTCRQQPIIGIRWKCAECTNYDLCTVCYHGDKHHLRHRFYRITTPGS) form a ZZ-type zinc finger. Residues C85, C88, C100, C103, C109, C112, H118, and H122 each contribute to the Zn(2+) site. Positions 143 to 221 (SKKITARGIF…MSDLKCVQDA (79 aa)) constitute an MIB/HERC2 2 domain. ANK repeat units follow at residues 430 to 460 (DLNE…DVNG), 463 to 492 (AGHT…DVEA), 496 to 525 (DGDR…DLNA), 529 to 558 (RRQT…HPSL), 562 to 591 (EGDT…DVTI), 595 to 627 (NGFN…IVDE), 631 to 661 (DGYT…NLDI), 665 to 694 (NQQT…KLDI), and 698 to 729 (DGDT…KVDT). 2 consecutive RING-type zinc fingers follow at residues 820–855 (CMVC…LLCK) and 867–902 (CVVC…VQCR). Residues 936 to 963 (QKDKDNTNVNADVQKLQQQLQDIKEQTM) are a coiled coil. An RING-type 3 zinc finger spans residues 964 to 997 (CPVCLDRLKNMIFMCGHGTCQLCGDRMSECPICR).

Its subcellular location is the cytoplasm. The protein resides in the cytoskeleton. The protein localises to the microtubule organizing center. It is found in the centrosome. It localises to the centriolar satellite. The catalysed reaction is S-ubiquitinyl-[E2 ubiquitin-conjugating enzyme]-L-cysteine + [acceptor protein]-L-lysine = [E2 ubiquitin-conjugating enzyme]-L-cysteine + N(6)-ubiquitinyl-[acceptor protein]-L-lysine.. The protein operates within protein modification; protein ubiquitination. E3 ubiquitin-protein ligase that mediates ubiquitination of Delta receptors, which act as ligands of Notch proteins. Positively regulates the Delta-mediated Notch signaling by ubiquitinating the intracellular domain of Delta, leading to endocytosis of Delta receptors. This chain is E3 ubiquitin-protein ligase mib1 (mib1), found in Xenopus laevis (African clawed frog).